A 100-amino-acid polypeptide reads, in one-letter code: Phosphoribosyl-ATP pyrophosphatase (100 aa).

It belongs to the PRA-PH family.

The protein resides in the cytoplasm. It carries out the reaction 1-(5-phospho-beta-D-ribosyl)-ATP + H2O = 1-(5-phospho-beta-D-ribosyl)-5'-AMP + diphosphate + H(+). The protein operates within amino-acid biosynthesis; L-histidine biosynthesis; L-histidine from 5-phospho-alpha-D-ribose 1-diphosphate: step 2/9. This Haloquadratum walsbyi (strain DSM 16790 / HBSQ001) protein is Phosphoribosyl-ATP pyrophosphatase.